Here is a 416-residue protein sequence, read N- to C-terminus: Phosphatidylinositol 5-phosphate 4-kinase type-2 beta (416 aa).

Serine 2 carries the post-translational modification N-acetylserine. Threonine 8 bears the Phosphothreonine mark. Serine 19 is modified (phosphoserine). Residues 38-415 (ASEPILSVLM…RFNEFMSNIL (378 aa)) form the PIPK domain. Residues 64–70 (VMLMPDD) form a required for interaction with PIP5K1A region. 2 positions are modified to N6-acetyllysine: lysine 94 and lysine 150. ATP-binding positions include 202-204 (RNV) and lysine 214. GTP-binding positions include 203-204 (NV) and lysine 214. At threonine 322 the chain carries Phosphothreonine. Serine 326 carries the post-translational modification Phosphoserine. Position 369 (aspartate 369) interacts with GTP.

In terms of assembly, homodimer. Binds TNFRSF1A. Interacts with PIP4K2A; the interaction suppresses ubiquitination by the SPOP/CUL3 complex. Probably interacts with PIP5K1A; the interaction inhibits PIP5K1A kinase activity. Post-translationally, ubiquitinated by the SPOP/CUL3 complex. Ubiquitination is stimulated by PtdIns5P levels. In terms of processing, phosphorylated on serine residues.

Its subcellular location is the endoplasmic reticulum membrane. It is found in the cell membrane. The protein localises to the nucleus. It localises to the cytoplasm. The enzyme catalyses a 1,2-diacyl-sn-glycero-3-phospho-(1D-myo-inositol-5-phosphate) + ATP = a 1,2-diacyl-sn-glycero-3-phospho-(1D-myo-inositol-4,5-bisphosphate) + ADP + H(+). It catalyses the reaction 1,2-dihexadecanoyl-sn-glycero-3-phospho-(1D-myo-inositol-5-phosphate) + ATP = 1,2-dihexadecanoyl-sn-glycero-3-phospho-(1D-myo-inositol-4,5-bisphosphate) + ADP + H(+). The catalysed reaction is 1,2-dihexadecanoyl-sn-glycero-3-phospho-(1D-myo-inositol-5-phosphate) + GTP = 1,2-dihexadecanoyl-sn-glycero-3-phospho-(1D-myo-inositol-4,5-bisphosphate) + GDP + H(+). In terms of biological role, participates in the biosynthesis of phosphatidylinositol 4,5-bisphosphate. Preferentially utilizes GTP, rather than ATP, for PI(5)P phosphorylation and its activity reflects changes in direct proportion to the physiological GTP concentration. Its GTP-sensing activity is critical for metabolic adaptation. In collaboration with PIP4K2A, has a role in mediating autophagy in times of nutrient stress. Required for autophagosome-lysosome fusion and the regulation of cellular lipid metabolism. PIP4Ks negatively regulate insulin signaling through a catalytic-independent mechanism. They interact with PIP5Ks and suppress PIP5K-mediated PtdIns(4,5)P2 synthesis and insulin-dependent conversion to PtdIns(3,4,5)P3. The polypeptide is Phosphatidylinositol 5-phosphate 4-kinase type-2 beta (Mus musculus (Mouse)).